A 102-amino-acid chain; its full sequence is Cytochrome b (102 aa).

A run of 3 helical transmembrane segments spans residues 1 to 21 (FGSL…FLAM), 45 to 66 (WLMR…FLHI), and 81 to 101 (WNIG…GYVL). 2 residues coordinate heme b: H51 and H65.

Belongs to the cytochrome b family. As to quaternary structure, the cytochrome bc1 complex contains 3 respiratory subunits (MT-CYB, CYC1 and UQCRFS1), 2 core proteins (UQCRC1 and UQCRC2) and probably 6 low-molecular weight proteins. Requires heme b as cofactor.

Its subcellular location is the mitochondrion inner membrane. In terms of biological role, component of the ubiquinol-cytochrome c reductase complex (complex III or cytochrome b-c1 complex) that is part of the mitochondrial respiratory chain. The b-c1 complex mediates electron transfer from ubiquinol to cytochrome c. Contributes to the generation of a proton gradient across the mitochondrial membrane that is then used for ATP synthesis. This Ambystoma tigrinum (Eastern tiger salamander) protein is Cytochrome b (mt-cyb).